Consider the following 51-residue polypeptide: Ribosome biogenesis protein Nop10 (51 aa).

The protein belongs to the NOP10 family.

Functionally, involved in ribosome biogenesis; more specifically in 18S rRNA pseudouridylation and in cleavage of pre-rRNA. The polypeptide is Ribosome biogenesis protein Nop10 (Nitrosopumilus maritimus (strain SCM1)).